The following is a 616-amino-acid chain: MRDFLKLLKKHDELKIIDTPLEVDLEIAHLAYIEAKKPNGGKALLFTQPIRKEHDQIKTFGMPVLMNAFGSFKRLDLLLKTPIESLQQRMQAFLHFNAPKNFTEGLKVLKDLWDLRHIFPKKTTRPKDLIIKQDKEVNLLDLPVLKTWEKDGGAFITMGQVYTQSLDHQKKNLGMYRLQVYDKNHLGLHWQIHKDSQLFFHEYAKAKVKMPVSIAIGGDLLYTWCATAPLPYGIYELMLYGFMRGKKARVMPCLSNSLSVPSDCDIVIEGFVDCEKLELEGPFGDHTGYYTPIEPYPVLEVKTISYKKDSIYLATVVGKPPLEDKYMGYLTERLFLPLLQMNAPNLIEYYMPENGVFHNLILAKIHTRYNAHAKQVMHAFWGVGQMSFVKHAIFVNEDAPNLRDTNAIIEYILENFSKENALISQGVCDALDHASPEYAMGGKLGIDATSKSNTPYPTLLNDSALLALLQDKMQNIVLLKQYYPHTRNPICVISVEKKDKSVIELAKNLLGFEEHLRIVIFVEHASNDLNNPYMLLWRIVNNIDARRDILTSKHCFFIDATNKGVMDKHFREWPTETNCSMEVIENLKKKGLLKDFETLNQKFHLTHSFSTHKEDL.

This sequence belongs to the UbiD family.

This is an uncharacterized protein from Helicobacter pylori (strain ATCC 700392 / 26695) (Campylobacter pylori).